We begin with the raw amino-acid sequence, 519 residues long: 2,3-bisphosphoglycerate-independent phosphoglycerate mutase (519 aa).

Aspartate 18 and serine 68 together coordinate Mn(2+). Residue serine 68 is the Phosphoserine intermediate of the active site. Residues histidine 129, 159–160, arginine 191, arginine 197, 267–270, and lysine 341 contribute to the substrate site; these read RD and RADR. Mn(2+)-binding residues include aspartate 408, histidine 412, aspartate 449, histidine 450, and histidine 468.

The protein belongs to the BPG-independent phosphoglycerate mutase family. Monomer. The cofactor is Mn(2+).

The enzyme catalyses (2R)-2-phosphoglycerate = (2R)-3-phosphoglycerate. Its pathway is carbohydrate degradation; glycolysis; pyruvate from D-glyceraldehyde 3-phosphate: step 3/5. Its function is as follows. Catalyzes the interconversion of 2-phosphoglycerate and 3-phosphoglycerate. The sequence is that of 2,3-bisphosphoglycerate-independent phosphoglycerate mutase from Coxiella burnetii (strain RSA 493 / Nine Mile phase I).